Consider the following 279-residue polypeptide: Undecaprenyl-diphosphatase (279 aa).

The next 8 helical transmembrane spans lie at 2–22 (LIIE…TEWL), 44–64 (AFIE…VMLI), 85–105 (WQLW…AVPL), 113–133 (FYFM…FIWI), 163–183 (VLSI…AIIL), 188–208 (TVAA…YSGL), 223–243 (AQVL…LLAI), and 255–275 (FTIF…YSFF).

This sequence belongs to the UppP family.

Its subcellular location is the cell membrane. It catalyses the reaction di-trans,octa-cis-undecaprenyl diphosphate + H2O = di-trans,octa-cis-undecaprenyl phosphate + phosphate + H(+). Its function is as follows. Catalyzes the dephosphorylation of undecaprenyl diphosphate (UPP). Confers resistance to bacitracin. This Streptococcus pyogenes serotype M28 (strain MGAS6180) protein is Undecaprenyl-diphosphatase.